Reading from the N-terminus, the 245-residue chain is 7-cyano-7-deazaguanine synthase (245 aa).

An ATP-binding site is contributed by Phe-19–Leu-29. Cys-207, Cys-222, Cys-225, and Cys-228 together coordinate Zn(2+).

It belongs to the QueC family. Zn(2+) is required as a cofactor.

It catalyses the reaction 7-carboxy-7-deazaguanine + NH4(+) + ATP = 7-cyano-7-deazaguanine + ADP + phosphate + H2O + H(+). It functions in the pathway purine metabolism; 7-cyano-7-deazaguanine biosynthesis. Catalyzes the ATP-dependent conversion of 7-carboxy-7-deazaguanine (CDG) to 7-cyano-7-deazaguanine (preQ(0)). This Gluconacetobacter diazotrophicus (strain ATCC 49037 / DSM 5601 / CCUG 37298 / CIP 103539 / LMG 7603 / PAl5) protein is 7-cyano-7-deazaguanine synthase.